A 57-amino-acid chain; its full sequence is uncharacterized protein (57 aa).

A run of 2 helical transmembrane segments spans residues 2 to 22 and 29 to 49; these read LLVVIFGLVALFALWGVLRSV and GFLLAGATLFVFGWFTVMTVI.

It is found in the cell membrane. This is an uncharacterized protein from Bacillus subtilis (strain 168).